Consider the following 324-residue polypeptide: Glycerol-3-phosphate dehydrogenase [NAD(P)+] (324 aa).

The NADPH site is built by phenylalanine 11, arginine 31, and lysine 107. Residues lysine 107 and glycine 135 each contribute to the sn-glycerol 3-phosphate site. Alanine 139 contributes to the NADPH binding site. Sn-glycerol 3-phosphate contacts are provided by lysine 190, aspartate 245, serine 255, arginine 256, and asparagine 257. The active-site Proton acceptor is lysine 190. Position 256 (arginine 256) interacts with NADPH. 2 residues coordinate NADPH: valine 278 and glutamate 279.

Belongs to the NAD-dependent glycerol-3-phosphate dehydrogenase family.

It localises to the cytoplasm. It carries out the reaction sn-glycerol 3-phosphate + NAD(+) = dihydroxyacetone phosphate + NADH + H(+). It catalyses the reaction sn-glycerol 3-phosphate + NADP(+) = dihydroxyacetone phosphate + NADPH + H(+). Its pathway is membrane lipid metabolism; glycerophospholipid metabolism. In terms of biological role, catalyzes the reduction of the glycolytic intermediate dihydroxyacetone phosphate (DHAP) to sn-glycerol 3-phosphate (G3P), the key precursor for phospholipid synthesis. The chain is Glycerol-3-phosphate dehydrogenase [NAD(P)+] from Anaplasma phagocytophilum (strain HZ).